Consider the following 247-residue polypeptide: tRNA pseudouridine synthase A (247 aa).

Catalysis depends on Asp52, which acts as the Nucleophile. A substrate-binding site is contributed by Tyr113.

It belongs to the tRNA pseudouridine synthase TruA family. As to quaternary structure, homodimer.

It catalyses the reaction uridine(38/39/40) in tRNA = pseudouridine(38/39/40) in tRNA. Functionally, formation of pseudouridine at positions 38, 39 and 40 in the anticodon stem and loop of transfer RNAs. The protein is tRNA pseudouridine synthase A of Bartonella bacilliformis (strain ATCC 35685 / KC583 / Herrer 020/F12,63).